The chain runs to 439 residues: Transmembrane protease serine 11F (439 aa).

Topologically, residues 1–33 are cytoplasmic; the sequence is MMYAPVEFSQTAYPRIEYQRRQQQFWDPIRLAL. The chain crosses the membrane as a helical; Signal-anchor for type II membrane protein span at residues 34–54; the sequence is FTLAIVAIVGITIGIVTHFVV. Residues 55 to 439 are Extracellular-facing; that stretch reads EDDKSFYYLA…RDWIASKTGL (385 aa). An SEA domain is found at 58–176; the sequence is KSFYYLASFQ…PSFSLTPIDS (119 aa). In terms of domain architecture, Peptidase S1 spans 207–438; that stretch reads IVQGRETAME…YRDWIASKTG (232 aa). C234 and C250 form a disulfide bridge. Residues H249 and D294 each act as charge relay system in the active site. Disulfide bonds link C359-C375 and C386-C414. The active-site Charge relay system is S390.

Belongs to the peptidase S1 family.

It localises to the membrane. Probable serine protease. In Mus musculus (Mouse), this protein is Transmembrane protease serine 11F (Tmprss11f).